Reading from the N-terminus, the 427-residue chain is Glutamate-1-semialdehyde 2,1-aminomutase (427 aa).

Lysine 269 is modified (N6-(pyridoxal phosphate)lysine).

It belongs to the class-III pyridoxal-phosphate-dependent aminotransferase family. HemL subfamily. Homodimer. Requires pyridoxal 5'-phosphate as cofactor.

It is found in the cytoplasm. It carries out the reaction (S)-4-amino-5-oxopentanoate = 5-aminolevulinate. It functions in the pathway porphyrin-containing compound metabolism; protoporphyrin-IX biosynthesis; 5-aminolevulinate from L-glutamyl-tRNA(Glu): step 2/2. The protein is Glutamate-1-semialdehyde 2,1-aminomutase of Thermus thermophilus (strain ATCC BAA-163 / DSM 7039 / HB27).